The chain runs to 197 residues: Dephospho-CoA kinase (197 aa).

A DPCK domain is found at 2 to 197; the sequence is IIGITGGIAS…SALLSLANPR (196 aa). Position 10–15 (10–15) interacts with ATP; sequence ASGKST.

It belongs to the CoaE family.

Its subcellular location is the cytoplasm. It catalyses the reaction 3'-dephospho-CoA + ATP = ADP + CoA + H(+). Its pathway is cofactor biosynthesis; coenzyme A biosynthesis; CoA from (R)-pantothenate: step 5/5. Functionally, catalyzes the phosphorylation of the 3'-hydroxyl group of dephosphocoenzyme A to form coenzyme A. The protein is Dephospho-CoA kinase of Streptococcus pyogenes serotype M3 (strain ATCC BAA-595 / MGAS315).